A 391-amino-acid chain; its full sequence is Phosphoglycerate kinase (391 aa).

Residues 21–23, arginine 36, 59–62, arginine 113, and arginine 146 contribute to the substrate site; these read DLN and HLGR. ATP is bound by residues lysine 197, glutamate 319, and 345 to 348; that span reads GGDT.

It belongs to the phosphoglycerate kinase family. Monomer.

The protein localises to the cytoplasm. The catalysed reaction is (2R)-3-phosphoglycerate + ATP = (2R)-3-phospho-glyceroyl phosphate + ADP. Its pathway is carbohydrate degradation; glycolysis; pyruvate from D-glyceraldehyde 3-phosphate: step 2/5. In Shewanella baltica (strain OS223), this protein is Phosphoglycerate kinase.